Consider the following 461-residue polypeptide: UDP-N-acetylmuramoylalanine--D-glutamate ligase (461 aa).

Position 115 to 121 (115 to 121 (GSNGKTT)) interacts with ATP.

This sequence belongs to the MurCDEF family.

The protein resides in the cytoplasm. It carries out the reaction UDP-N-acetyl-alpha-D-muramoyl-L-alanine + D-glutamate + ATP = UDP-N-acetyl-alpha-D-muramoyl-L-alanyl-D-glutamate + ADP + phosphate + H(+). Its pathway is cell wall biogenesis; peptidoglycan biosynthesis. Its function is as follows. Cell wall formation. Catalyzes the addition of glutamate to the nucleotide precursor UDP-N-acetylmuramoyl-L-alanine (UMA). This chain is UDP-N-acetylmuramoylalanine--D-glutamate ligase, found in Acidobacterium capsulatum (strain ATCC 51196 / DSM 11244 / BCRC 80197 / JCM 7670 / NBRC 15755 / NCIMB 13165 / 161).